We begin with the raw amino-acid sequence, 368 residues long: Inner kinetochore subunit MCM21 (368 aa).

A coiled-coil region spans residues 1 to 43 (MSRIDDLQQDIESLLSEINSLEESREKLKAKIKDKRKNEESAN). The residue at position 88 (Thr-88) is a Phosphothreonine.

This sequence belongs to the CENP-O/MCM21 family. In terms of assembly, component of the heterotetrameric kinetochore subcomplex COMA, which consists of AME1, CTF19, MCM21 and OKP1. The COMA subcomplex is part of a larger constitutive centromere-associated network (CCAN) (also known as central kinetochore CTF19 complex in yeast), which is composed of at least AME1, CHL4, CNN1, CTF3, CTF19, IML3, MCM16, MCM21, MCM22, MHF1, MHF2, MIF2, NKP1, NKP2, OKP1 and WIP1. COMA binds the centromeric nucleosome-binding protein MIF2, and to the outer kinetochore MIND subcomplex.

It localises to the nucleus. It is found in the chromosome. The protein resides in the centromere. Its subcellular location is the kinetochore. In terms of biological role, component of the kinetochore, a multiprotein complex that assembles on centromeric DNA and attaches chromosomes to spindle microtubules, mediating chromosome segregation and sister chromatid segregation during meiosis and mitosis. Component of the inner kinetochore COMA complex, which connects centromere-associated proteins and the outer kinetochore. COMA interacts with other inner kinetochore proteins to form the inner kinetochore constitutive centromere-associated network (CCAN), which serves as a structural platform for outer kinetochore assembly. The chain is Inner kinetochore subunit MCM21 (MCM21) from Saccharomyces cerevisiae (strain ATCC 204508 / S288c) (Baker's yeast).